The sequence spans 385 residues: S-adenosylmethionine synthase (385 aa).

His14 is a binding site for ATP. Asp16 lines the Mg(2+) pocket. Glu42 lines the K(+) pocket. Positions 55 and 98 each coordinate L-methionine. The segment at 98–108 (QSGDIAQAVDN) is flexible loop. ATP is bound by residues 165–167 (DAK), 232–233 (RF), Asp241, 247–248 (RK), Ala264, and Lys268. An L-methionine-binding site is contributed by Asp241. Lys272 lines the L-methionine pocket.

The protein belongs to the AdoMet synthase family. In terms of assembly, homotetramer; dimer of dimers. Requires Mg(2+) as cofactor. The cofactor is K(+).

Its subcellular location is the cytoplasm. The catalysed reaction is L-methionine + ATP + H2O = S-adenosyl-L-methionine + phosphate + diphosphate. It functions in the pathway amino-acid biosynthesis; S-adenosyl-L-methionine biosynthesis; S-adenosyl-L-methionine from L-methionine: step 1/1. In terms of biological role, catalyzes the formation of S-adenosylmethionine (AdoMet) from methionine and ATP. The overall synthetic reaction is composed of two sequential steps, AdoMet formation and the subsequent tripolyphosphate hydrolysis which occurs prior to release of AdoMet from the enzyme. The protein is S-adenosylmethionine synthase of Leuconostoc mesenteroides subsp. mesenteroides (strain ATCC 8293 / DSM 20343 / BCRC 11652 / CCM 1803 / JCM 6124 / NCDO 523 / NBRC 100496 / NCIMB 8023 / NCTC 12954 / NRRL B-1118 / 37Y).